The primary structure comprises 62 residues: Small ribosomal subunit protein eS27 (62 aa).

Zn(2+)-binding residues include cysteine 17, cysteine 20, cysteine 36, and cysteine 39. A C4-type zinc finger spans residues 17-39; that stretch reads CPECNNEQIVFGSPATVVKCLTC.

It belongs to the eukaryotic ribosomal protein eS27 family. As to quaternary structure, part of the 30S ribosomal subunit. Requires Zn(2+) as cofactor.

The sequence is that of Small ribosomal subunit protein eS27 from Methanocaldococcus jannaschii (strain ATCC 43067 / DSM 2661 / JAL-1 / JCM 10045 / NBRC 100440) (Methanococcus jannaschii).